The chain runs to 95 residues: Cell division topological specificity factor (95 aa).

Belongs to the MinE family.

Its function is as follows. Prevents the cell division inhibition by proteins MinC and MinD at internal division sites while permitting inhibition at polar sites. This ensures cell division at the proper site by restricting the formation of a division septum at the midpoint of the long axis of the cell. The chain is Cell division topological specificity factor from Methylorubrum extorquens (strain PA1) (Methylobacterium extorquens).